The sequence spans 292 residues: ATP synthase gamma chain (292 aa).

Belongs to the ATPase gamma chain family. F-type ATPases have 2 components, CF(1) - the catalytic core - and CF(0) - the membrane proton channel. CF(1) has five subunits: alpha(3), beta(3), gamma(1), delta(1), epsilon(1). CF(0) has three main subunits: a, b and c.

It localises to the cell inner membrane. Produces ATP from ADP in the presence of a proton gradient across the membrane. The gamma chain is believed to be important in regulating ATPase activity and the flow of protons through the CF(0) complex. This Rhodopseudomonas palustris (strain BisB18) protein is ATP synthase gamma chain.